A 379-amino-acid chain; its full sequence is Cyclic dinucleotide synthase CdnE (379 aa).

Positions 107, 109, 123, and 179 each coordinate UTP. Residue D123 participates in Mg(2+) binding. D193 lines the Mg(2+) pocket. Residues N229, K257, and S274 each coordinate UTP. The short motif at 328-330 (KIF) is the Pyrimidine specificity motif (R/Q)xW in donor pocket element.

The protein belongs to the CD-NTase family. E02 subfamily. Mg(2+) is required as a cofactor.

The enzyme catalyses 2 UTP = c-di-UMP + 2 diphosphate. The catalysed reaction is UTP + ATP = 3',3'-cUAMP + 2 diphosphate. It carries out the reaction UTP + CTP = cyclic CMP-UMP + 2 diphosphate. Functionally, cyclic nucleotide synthase (second messenger synthase) of a CBASS antivirus system. CBASS (cyclic oligonucleotide-based antiphage signaling system) provides immunity against bacteriophage. The CD-NTase protein synthesizes cyclic nucleotides in response to infection; these serve as specific second messenger signals. The signals activate a diverse range of effectors, leading to bacterial cell death and thus abortive phage infection. The effector protein for this system is membrane protein Cap15. A type I-B(UU) CBASS system. Its function is as follows. Cyclic dinucleotide synthase that preferentially catalyzes the synthesis of 3',3'-cyclic UMP-UMP (c-di-UMP) and 3',3'-cyclic UMP-AMP, with minor amounts of 3',3'-cyclic UMP-CMP, which are second messengers for cell signal transduction. Protects E.coli against phage infection. When the CBASS operon (cap15-cdnE) is introduced in E.coli MG1655 it protects against phages T2, T4, T5, T6, SECPhi4, SECPhi6, SECPhi17, SECPhi18 and SECPhi27, but not against phage T7. This Yersinia aleksiciae protein is Cyclic dinucleotide synthase CdnE.